The following is a 143-amino-acid chain: Putative pre-16S rRNA nuclease (143 aa).

This sequence belongs to the YqgF nuclease family.

Its subcellular location is the cytoplasm. Its function is as follows. Could be a nuclease involved in processing of the 5'-end of pre-16S rRNA. This is Putative pre-16S rRNA nuclease from Crocosphaera subtropica (strain ATCC 51142 / BH68) (Cyanothece sp. (strain ATCC 51142)).